We begin with the raw amino-acid sequence, 377 residues long: Putative zinc metalloprotease Atu1380 (377 aa).

Histidine 29 lines the Zn(2+) pocket. Residue glutamate 30 is part of the active site. Residue histidine 33 participates in Zn(2+) binding. The next 3 helical transmembrane spans lie at 118-140, 299-321, and 351-373; these read VAAG…FGIY, LGIS…LNLM, and VAFR…NDIS. Residues 129-202 enclose the PDZ domain; the sequence is AILIFAVLFG…TPITVTVERA (74 aa).

It belongs to the peptidase M50B family. Requires Zn(2+) as cofactor.

Its subcellular location is the cell inner membrane. In Agrobacterium fabrum (strain C58 / ATCC 33970) (Agrobacterium tumefaciens (strain C58)), this protein is Putative zinc metalloprotease Atu1380.